Consider the following 54-residue polypeptide: Califin-B (54 aa).

A disulfide bond links Cys25 and Cys53. Leu36 is modified (leucine amide).

This sequence belongs to the molluscan ELH family. This protein consists of a large 36-residue subunit, bound by a single disulfide-bond to a small 18-residue subunit.

It localises to the secreted. Its function is as follows. Injected in sexually mature animals califin B excites LB and LC cells of the abdominal ganglion and cause egg-laying. The sequence is that of Califin-B from Aplysia californica (California sea hare).